The following is a 390-amino-acid chain: 2-deoxy-scyllo-inosose synthase (390 aa).

NAD(+)-binding positions include aspartate 42, 73-76 (EQNK), 105-109 (GVTGN), 129-130 (TT), 140-142 (SLK), and 151-152 (KN). The active site involves lysine 142. A Co(2+)-binding site is contributed by glutamate 184. Glutamate 244 is an active-site residue. 2 residues coordinate Co(2+): histidine 247 and histidine 263. The interval 371-390 (PPRPAAARTDDAATVLGGAG) is disordered.

Belongs to the sugar phosphate cyclases superfamily. DOI synthase family. NAD(+) serves as cofactor. Requires Co(2+) as cofactor.

The enzyme catalyses D-glucose 6-phosphate = 2-deoxy-L-scyllo-inosose + phosphate. Its pathway is metabolic intermediate biosynthesis; 2-deoxystreptamine biosynthesis; 2-deoxystreptamine from D-glucose 6-phosphate: step 1/4. It participates in antibiotic biosynthesis; kanamycin biosynthesis. Its function is as follows. Catalyzes the intramolecular carbocycle formation from D-glucose-6-phosphate to 2-deoxy-scyllo-inosose (DOI). This Streptomyces kanamyceticus protein is 2-deoxy-scyllo-inosose synthase (kanC).